We begin with the raw amino-acid sequence, 471 residues long: Desmin (471 aa).

Residues 2 to 109 form a head region; that stretch reads SQAYSSSQRV…QEFLTTRTNE (108 aa). Serine 7 bears the Phosphoserine; by CDK1 mark. Phosphoserine; by AURKB is present on serine 12. Omega-N-methylarginine is present on arginine 16. Threonine 17 carries the phosphothreonine; by AURKB and ROCK1 modification. The residue at position 28 (serine 28) is a Phosphoserine; by CDK1. Position 31 is a phosphoserine (serine 31). Serine 32 carries the phosphoserine; by CDK1 modification. Arginine 37 carries the post-translational modification Asymmetric dimethylarginine; alternate. Arginine 37 bears the Omega-N-methylarginine; alternate mark. At serine 45 the chain carries Phosphoserine. The residue at position 58 (arginine 58) is an ADP-ribosylarginine. Phosphoserine; by AURKB is present on serine 60. The residue at position 70 (arginine 70) is an Omega-N-methylarginine. Threonine 77 bears the Phosphothreonine; by ROCK1 mark. At serine 81 the chain carries Phosphoserine. Residues 109 to 417 enclose the IF rod domain; that stretch reads EKVELQELND…KLLEGEESRI (309 aa). Positions 110–142 are coil 1A; the sequence is KVELQELNDRFANYIEKVRFLEQQNAALAAEVN. A linker 1 region spans residues 143–152; it reads RLKGREPTRV. The coil 1B stretch occupies residues 153-253; it reads AEIYEEELRE…HEEEIRELQA (101 aa). A linker 12 region spans residues 254 to 269; it reads QLQEQQVQVEMDMSKP. The tract at residues 269–416 is interaction with NEB; sequence PDLTAALRDI…RKLLEGEESR (148 aa). Residues 270 to 288 form a coil 2A region; sequence DLTAALRDIRAQYETIAAK. Residues 289–296 are linker 2; that stretch reads NISEAEEW. Serine 291, serine 359, serine 362, and serine 425 each carry phosphoserine. A coil 2B region spans residues 297–413; it reads YKSKVSDLTQ…ATYRKLLEGE (117 aa). The segment at 414–471 is tail; it reads ESRINLPIQTFSALNFRETSPEQRGSEVHTKKTVMIKTIETRDGEVVSEATQQQHEVL. Positions 439–454 are interaction with CRYAB; it reads SEVHTKKTVMIKTIET.

Belongs to the intermediate filament family. Homomer. Interacts with DST. Interacts with MTM1. Interacts with EPPK1; interaction is dependent of higher-order structure of intermediate filament. Interacts with CRYAB. Interacts with NEB (via nebulin repeats 160-164). Interacts (via rod region) with NEBL (via nebulin repeats 1-5). Interacts with ASB2; the interaction targets DES for proteasomal degradation. Interacts with PKP1. Interacts with FLII. In terms of processing, ADP-ribosylation prevents ability to form intermediate filaments. Post-translationally, phosphorylation at Ser-7, Ser-28 and Ser-32 by CDK1 and phosphorylation at Ser-60 by AURKB contribute to efficient separation of desmin intermediate filaments during mitosis. Ubiquitination by a SCF-like complex containing ASB2 leads to proteasomal degradation.

It localises to the cytoplasm. The protein localises to the myofibril. The protein resides in the sarcomere. It is found in the z line. Its subcellular location is the cell membrane. It localises to the sarcolemma. The protein localises to the nucleus. The protein resides in the cell tip. It is found in the nucleus envelope. Muscle-specific type III intermediate filament essential for proper muscular structure and function. Plays a crucial role in maintaining the structure of sarcomeres, inter-connecting the Z-disks and forming the myofibrils, linking them not only to the sarcolemmal cytoskeleton, but also to the nucleus and mitochondria, thus providing strength for the muscle fiber during activity. In adult striated muscle they form a fibrous network connecting myofibrils to each other and to the plasma membrane from the periphery of the Z-line structures. May act as a sarcomeric microtubule-anchoring protein: specifically associates with detyrosinated tubulin-alpha chains, leading to buckled microtubules and mechanical resistance to contraction. Required for nuclear membrane integrity, via anchoring at the cell tip and nuclear envelope, resulting in maintenance of microtubule-derived intracellular mechanical forces. Contributes to the transcriptional regulation of the NKX2-5 gene in cardiac progenitor cells during a short period of cardiomyogenesis and in cardiac side population stem cells in the adult. Plays a role in maintaining an optimal conformation of nebulette (NEB) on heart muscle sarcomeres to bind and recruit cardiac alpha-actin. This is Desmin (DES) from Sus scrofa (Pig).